The following is an 88-amino-acid chain: MSKTFEELFAELAIKSQTRPAGSGTVEELDRGVHAIGKKIVEEASEVWMAAEHEGNERLAEEICQEIYHLQVMMIKQGLSLDDVYKHL.

It belongs to the PRA-PH family.

The protein localises to the cytoplasm. The catalysed reaction is 1-(5-phospho-beta-D-ribosyl)-ATP + H2O = 1-(5-phospho-beta-D-ribosyl)-5'-AMP + diphosphate + H(+). The protein operates within amino-acid biosynthesis; L-histidine biosynthesis; L-histidine from 5-phospho-alpha-D-ribose 1-diphosphate: step 2/9. This is Phosphoribosyl-ATP pyrophosphatase from Cutibacterium acnes (strain DSM 16379 / KPA171202) (Propionibacterium acnes).